We begin with the raw amino-acid sequence, 429 residues long: MSITPSFSRRSVVSLLAAGAFSSMSAFAQFRVEVSGVGMTQLPIAIAPFRGEAQSPQKIGSIVKADLERSGMFRGVDAGGVVADENTRPDLASWRQKGADAMVTGSVSPLADGRFDVRLRLWDVVREQDLGGQSYTVTKSDLRLSAHRVSDFVYEKLTGEKGIFSTRIAYVTKAGQRYTLWVADSDGESAQSALASPEPIISPAWSPSGAQLAYVSFESRKPVIYSHDVATGKRRLLANFRGSNSAPAWSPDGSQLVATLSQAGGSQIYSIGLNGGDPKRLTQSSSIDTEPAFSPDGRLIYFVSDRGGSPQIYRMSPAGGNAERVTFTGSYNISPVVSPDGRWLAYVSRVGGGFKLHVMELSTGTVTSITDTSADESPSFAPNSRLIVYATQQQGKEALMTTTLDGKIKARLSGAGGDIREPDWGPFQR.

The signal sequence occupies residues 1-28 (MSITPSFSRRSVVSLLAAGAFSSMSAFA).

Belongs to the TolB family. The Tol-Pal system is composed of five core proteins: the inner membrane proteins TolA, TolQ and TolR, the periplasmic protein TolB and the outer membrane protein Pal. They form a network linking the inner and outer membranes and the peptidoglycan layer.

The protein resides in the periplasm. Its function is as follows. Part of the Tol-Pal system, which plays a role in outer membrane invagination during cell division and is important for maintaining outer membrane integrity. In Polaromonas naphthalenivorans (strain CJ2), this protein is Tol-Pal system protein TolB.